The sequence spans 185 residues: Ribosome-recycling factor (185 aa).

Belongs to the RRF family.

The protein localises to the cytoplasm. Responsible for the release of ribosomes from messenger RNA at the termination of protein biosynthesis. May increase the efficiency of translation by recycling ribosomes from one round of translation to another. The sequence is that of Ribosome-recycling factor from Saccharopolyspora erythraea (strain ATCC 11635 / DSM 40517 / JCM 4748 / NBRC 13426 / NCIMB 8594 / NRRL 2338).